A 456-amino-acid polypeptide reads, in one-letter code: UDP-N-acetylmuramoylalanine--D-glutamate ligase (456 aa).

Gly113–Thr119 is a binding site for ATP.

This sequence belongs to the MurCDEF family.

Its subcellular location is the cytoplasm. The enzyme catalyses UDP-N-acetyl-alpha-D-muramoyl-L-alanine + D-glutamate + ATP = UDP-N-acetyl-alpha-D-muramoyl-L-alanyl-D-glutamate + ADP + phosphate + H(+). It participates in cell wall biogenesis; peptidoglycan biosynthesis. In terms of biological role, cell wall formation. Catalyzes the addition of glutamate to the nucleotide precursor UDP-N-acetylmuramoyl-L-alanine (UMA). This Rippkaea orientalis (strain PCC 8801 / RF-1) (Cyanothece sp. (strain PCC 8801)) protein is UDP-N-acetylmuramoylalanine--D-glutamate ligase.